Here is an 84-residue protein sequence, read N- to C-terminus: Large ribosomal subunit protein bL27 (84 aa).

Belongs to the bacterial ribosomal protein bL27 family.

The polypeptide is Large ribosomal subunit protein bL27 (Buchnera aphidicola subsp. Acyrthosiphon pisum (strain Tuc7)).